A 188-amino-acid chain; its full sequence is Interferon alpha-2 (188 aa).

The first 23 residues, 1-23 (MALTFALLVALLVLSCKSSCSVG), serve as a signal peptide directing secretion. Intrachain disulfides connect Cys-24-Cys-121 and Cys-52-Cys-161. O-linked (GalNAc...) threonine glycosylation is present at Thr-129.

It belongs to the alpha/beta interferon family. As to quaternary structure, interacts with IFNAR2.

It is found in the secreted. Produced by macrophages, IFN-alpha have antiviral activities. The polypeptide is Interferon alpha-2 (IFNA2) (Homo sapiens (Human)).